The primary structure comprises 88 residues: Small ribosomal subunit protein bS20 (88 aa).

It belongs to the bacterial ribosomal protein bS20 family.

Binds directly to 16S ribosomal RNA. The polypeptide is Small ribosomal subunit protein bS20 (Rhodospirillum rubrum (strain ATCC 11170 / ATH 1.1.1 / DSM 467 / LMG 4362 / NCIMB 8255 / S1)).